The sequence spans 341 residues: MSKHKHEWTESVANSGPASILSYCASSILMTVTNKFVVNLDNFNMNFVMLFVQSLVCTVTLCILRIVGVANFRSLNRTDVKNWFPISLLLVLMIYTSLKSLQYLAVPIYTIFKNLTIILIAYGEVLFFGGKVTSMELTSFIMMVLSSVVATWGDQQAIAIKASSLEDLDQELVESTIFVLNPGYLWMFTNCISSALFVLIMRKRIRLTNFKDYDTMFYNNVLALPLLLVFSFIMEDWSTKNLSVNLSADSLAAMVISGLMSVGISYCSGWCVRVTSSTTYSMVGALNKLPIALAGLVFFDAPKNFLSFFSIFLGFLSGLLYAVAKQKKIQQQKVLAATLEK.

Topologically, residues 1 to 11 (MSKHKHEWTES) are cytoplasmic. The chain crosses the membrane as a helical span at residues 12-32 (VANSGPASILSYCASSILMTV). Residues 33–46 (TNKFVVNLDNFNMN) are Lumenal-facing. Residues 47-67 (FVMLFVQSLVCTVTLCILRIV) traverse the membrane as a helical segment. The Cytoplasmic portion of the chain corresponds to 68-85 (GVANFRSLNRTDVKNWFP). Residues 86–106 (ISLLLVLMIYTSLKSLQYLAV) form a helical membrane-spanning segment. Pro107 is a topological domain (lumenal). A helical membrane pass occupies residues 108–128 (IYTIFKNLTIILIAYGEVLFF). Over 129 to 139 (GGKVTSMELTS) the chain is Cytoplasmic. A helical membrane pass occupies residues 140-160 (FIMMVLSSVVATWGDQQAIAI). Residues 161–176 (KASSLEDLDQELVEST) lie on the Lumenal side of the membrane. The helical transmembrane segment at 177 to 197 (IFVLNPGYLWMFTNCISSALF) threads the bilayer. The Cytoplasmic segment spans residues 198-214 (VLIMRKRIRLTNFKDYD). A helical transmembrane segment spans residues 215–235 (TMFYNNVLALPLLLVFSFIME). The Lumenal segment spans residues 236–251 (DWSTKNLSVNLSADSL). Asn241 and Asn245 each carry an N-linked (GlcNAc...) asparagine glycan. A helical transmembrane segment spans residues 252-272 (AAMVISGLMSVGISYCSGWCV). The Cytoplasmic portion of the chain corresponds to 273–278 (RVTSST). The chain crosses the membrane as a helical span at residues 279–299 (TYSMVGALNKLPIALAGLVFF). Topologically, residues 300-303 (DAPK) are lumenal. Residues 304-324 (NFLSFFSIFLGFLSGLLYAVA) traverse the membrane as a helical segment. Residues 325 to 341 (KQKKIQQQKVLAATLEK) are Cytoplasmic-facing.

It belongs to the TPT transporter family. SLC35D subfamily.

It localises to the golgi apparatus membrane. The protein localises to the cytoplasmic vesicle membrane. It is found in the endoplasmic reticulum membrane. Its function is as follows. Involved in the import of GDP-mannose from the cytoplasm into the Golgi lumen. The chain is Probable GDP-mannose transporter 2 (HVG1) from Saccharomyces cerevisiae (strain Lalvin EC1118 / Prise de mousse) (Baker's yeast).